We begin with the raw amino-acid sequence, 223 residues long: Methanol utilization control regulatory protein MoxX (223 aa).

Residues 16 to 133 enclose the Response regulatory domain; it reads QILIVDDHPV…EICAAFTEVA (118 aa). The 66-residue stretch at 155–220 folds into the HTH luxR-type domain; the sequence is PGTSAPRLTG…DLVVKGIRYF (66 aa). The H-T-H motif DNA-binding region spans 179–198; it reads YRDIADRACISYKTVSNVSL.

Phosphorylated by MoxY.

The protein localises to the cytoplasm. Its function is as follows. Member of the two-component regulatory system MoxY/MoxX probably involved in the regulation of the methanol dehydrogenase expression. This chain is Methanol utilization control regulatory protein MoxX (moxX), found in Paracoccus denitrificans.